The sequence spans 189 residues: Putative manganese efflux pump MntP (189 aa).

The next 6 helical transmembrane spans lie at 3–23 (IVST…AAVS), 41–61 (MIFG…GRVA), 62–82 (ADYV…FLGI), 103–123 (SFIL…SVGV), 132–152 (IVPV…AGVM), and 167–187 (IIGG…HLYG).

The protein belongs to the MntP (TC 9.B.29) family.

Its subcellular location is the cell inner membrane. Functionally, probably functions as a manganese efflux pump. The chain is Putative manganese efflux pump MntP from Methylobacillus flagellatus (strain ATCC 51484 / DSM 6875 / VKM B-1610 / KT).